A 412-amino-acid polypeptide reads, in one-letter code: MPQQNYLDELTPAFTPLLAIKEASRCLLCHDAPCSQACPAQTDPGKFIRSIYFRNFKGAAETIRENNALGAVCARVCPTEKLCQSGCTRAGVDAPIDIGRLQRFVTDFEQQTGMEIYQPGTKTLGKVAIIGAGPAGLQASVTLTNQGYDVTIYEKEAHPGGWLRNGIPQFRLPQSVLDAEIARIEKMGVTIKCNNEIGKTLTLEQLKAENRAVLVTVGLSSGSGLPLFEHSDVEIAVDFLLRARQAQGDISIPQSALIIGGGDVAMDVASTLKVLGCQAVTCVAREELDEFPASEKEFASARELGVSIIDGFTPVAVEGNKVTFKHVRLSGELTMAADKIILAVGQHARLDDFAKLEPQRNTIKTQNYQTRDPQVFAAGDIVEGDKTVVYAVKTGKEAAEAIHHYLEGACSC.

Residue E286 participates in NAD(+) binding.

Belongs to the NADH dehydrogenase family. In terms of assembly, heterotetramer of 2 PreA and 2 PreT subunits.

The enzyme catalyses 5,6-dihydrouracil + NAD(+) = uracil + NADH + H(+). It carries out the reaction 5,6-dihydrothymine + NAD(+) = thymine + NADH + H(+). Involved in pyrimidine base degradation. Catalyzes physiologically the reduction of uracil to 5,6-dihydrouracil (DHU) by using NADH as a specific cosubstrate. It also catalyzes the reverse reaction and the reduction of thymine to 5,6-dihydrothymine (DHT). This is NAD-dependent dihydropyrimidine dehydrogenase subunit PreT (preT) from Escherichia coli O157:H7.